Consider the following 324-residue polypeptide: Archaeosine synthase subunit beta (324 aa).

One can recognise a Radical SAM core domain in the interval Gly12 to Asn254. Cys27, Cys36, and Cys39 together coordinate [4Fe-4S] cluster.

It belongs to the radical SAM superfamily. RaSEA family. In terms of assembly, forms a robust complex with the archaeosine synthase alpha subunit ArcS, likely an alpha(2)beta(2) heterotetrameric structure. [4Fe-4S] cluster serves as cofactor.

It catalyses the reaction 7-N-[(5S)-5-amino-5-carboxypentyl]formamidino-7-deazaguanosine(15) in tRNA + S-adenosyl-L-methionine = archaeosine(15) in tRNA + L-1-piperideine-6-carboxylate + 5'-deoxyadenosine + L-methionine + 2 H(+). Its pathway is tRNA modification; archaeosine-tRNA biosynthesis. Its function is as follows. Radical SAM enzyme involved in the synthesis of archaeosine, a modified nucleoside present in the dihydrouridine loop (D-loop) of archaeal tRNAs. Catalyzes the cleavage of the C(epsilon)-N bond of the lysine moiety of q0kN15-tRNA, leading to the formation of archaeosine at position 15 in tRNAs. This is Archaeosine synthase subunit beta from Thermococcus kodakarensis (strain ATCC BAA-918 / JCM 12380 / KOD1) (Pyrococcus kodakaraensis (strain KOD1)).